The sequence spans 194 residues: Histone H1.0 (194 aa).

Position 1 is an N-acetylmethionine (M1). Residues M1–A11 are compositionally biased toward low complexity. The tract at residues M1–Y28 is disordered. N-acetylthreonine; in Histone H1.0, N-terminally processed is present on T2. The 74-residue stretch at D24–K97 folds into the H15 domain. A Citrulline modification is found at R42. The interval G86–K194 is disordered. The residue at position 104 (S104) is an ADP-ribosylserine. Residues V105–K194 show a composition bias toward basic residues.

Belongs to the histone H1/H5 family. Post-translationally, ADP-ribosylated on Ser-104 in response to DNA damage.

Its subcellular location is the nucleus. It localises to the chromosome. Functionally, histones H1 are necessary for the condensation of nucleosome chains into higher-order structures. The histones H1.0 are found in cells that are in terminal stages of differentiation or that have low rates of cell division. The sequence is that of Histone H1.0 (H1-0) from Mus musculus (Mouse).